We begin with the raw amino-acid sequence, 239 residues long: THAP domain-containing protein 3 (239 aa).

A THAP-type zinc finger spans residues Met-1–Phe-82. The interval Phe-84–Asp-177 is disordered. Ser-122 carries the post-translational modification Phosphoserine. The HCFC1-binding motif (HBM) signature appears at Asp-177 to Tyr-180.

In terms of assembly, component of a THAP1/THAP3-HCFC1-OGT complex that contains at least, either THAP1 or THAP3, HCFC1 and OGT. Interacts directly with OGT and HCFC1 (via its HBM). In terms of tissue distribution, highly expressed in heart, skeletal muscle and placenta. Weaker expression in brain, kidney and liver.

Component of a THAP1/THAP3-HCFC1-OGT complex that is required for the regulation of the transcriptional activity of RRM1. This is THAP domain-containing protein 3 (THAP3) from Homo sapiens (Human).